The sequence spans 421 residues: 4-hydroxy-3-methylbut-2-en-1-yl diphosphate synthase (flavodoxin) (421 aa).

[4Fe-4S] cluster-binding residues include Cys298, Cys301, Cys344, and Glu351.

This sequence belongs to the IspG family. [4Fe-4S] cluster is required as a cofactor.

It carries out the reaction (2E)-4-hydroxy-3-methylbut-2-enyl diphosphate + oxidized [flavodoxin] + H2O + 2 H(+) = 2-C-methyl-D-erythritol 2,4-cyclic diphosphate + reduced [flavodoxin]. Its pathway is isoprenoid biosynthesis; isopentenyl diphosphate biosynthesis via DXP pathway; isopentenyl diphosphate from 1-deoxy-D-xylulose 5-phosphate: step 5/6. In terms of biological role, converts 2C-methyl-D-erythritol 2,4-cyclodiphosphate (ME-2,4cPP) into 1-hydroxy-2-methyl-2-(E)-butenyl 4-diphosphate. This Neisseria meningitidis serogroup B (strain ATCC BAA-335 / MC58) protein is 4-hydroxy-3-methylbut-2-en-1-yl diphosphate synthase (flavodoxin).